Reading from the N-terminus, the 210-residue chain is Redox-sensing transcriptional repressor Rex (210 aa).

The segment at residues 17 to 56 (KYHRYLYELLKNDVDRISSKELSEKIGFTASQIRQDLNCF) is a DNA-binding region (H-T-H motif). 91 to 96 (GAGNIG) lines the NAD(+) pocket.

Belongs to the transcriptional regulatory Rex family. In terms of assembly, homodimer.

Its subcellular location is the cytoplasm. Its function is as follows. Modulates transcription in response to changes in cellular NADH/NAD(+) redox state. The chain is Redox-sensing transcriptional repressor Rex from Clostridium botulinum (strain Loch Maree / Type A3).